Here is a 113-residue protein sequence, read N- to C-terminus: Large ribosomal subunit protein uL22 (113 aa).

The protein belongs to the universal ribosomal protein uL22 family. As to quaternary structure, part of the 50S ribosomal subunit.

In terms of biological role, this protein binds specifically to 23S rRNA; its binding is stimulated by other ribosomal proteins, e.g. L4, L17, and L20. It is important during the early stages of 50S assembly. It makes multiple contacts with different domains of the 23S rRNA in the assembled 50S subunit and ribosome. Functionally, the globular domain of the protein is located near the polypeptide exit tunnel on the outside of the subunit, while an extended beta-hairpin is found that lines the wall of the exit tunnel in the center of the 70S ribosome. This Roseiflexus castenholzii (strain DSM 13941 / HLO8) protein is Large ribosomal subunit protein uL22.